The sequence spans 380 residues: MLYHFLYPLSGQFGLFNVLRYPSFRIVAAGLVSLLIGLLLGPLFIERMRVLQYGHSNVREDTPERHKKKAGTPSMGGALILLAVTVSTLLFADLGNRLVWAALLVTLGYGVIGFWDDWLKISKRNSKGLAGKKKLVLQVLVVLAVYYGLLTDWQPRTTDGFPFLTIGSLVDLHLTLPFVPTHLFSPSLGWLYLPFMIFVVVATSNAVNLTDGLDGLAIGPTIVSSMTFLALSYVAGATIAGFSLAEYLRIAYIPGAEELGVFCSAIFGAGIAFLWYNTYPASVFMGDVGSLALGGGLGMLAVLTKNEVASAILHGVFLAETVSVILQVWSFRTTGKRIFRMAPIHHHYELKGWAEPKIIVRFWIMSIMLALVALMSLKLR.

Transmembrane regions (helical) follow at residues 26–46, 75–95, 98–118, 135–155, 160–180, 183–203, 222–242, 259–279, 283–303, 311–331, and 357–377; these read IVAA…LFIE, MGGA…ADLG, LVWA…WDDW, LVLQ…DWQP, GFPF…PFVP, LFSP…VVAT, IVSS…IAGF, LGVF…YNTY, VFMG…LAVL, AILH…VWSF, and KIIV…LMSL.

It belongs to the glycosyltransferase 4 family. MraY subfamily. Mg(2+) serves as cofactor.

Its subcellular location is the cell inner membrane. The catalysed reaction is UDP-N-acetyl-alpha-D-muramoyl-L-alanyl-gamma-D-glutamyl-meso-2,6-diaminopimeloyl-D-alanyl-D-alanine + di-trans,octa-cis-undecaprenyl phosphate = di-trans,octa-cis-undecaprenyl diphospho-N-acetyl-alpha-D-muramoyl-L-alanyl-D-glutamyl-meso-2,6-diaminopimeloyl-D-alanyl-D-alanine + UMP. Its pathway is cell wall biogenesis; peptidoglycan biosynthesis. In terms of biological role, catalyzes the initial step of the lipid cycle reactions in the biosynthesis of the cell wall peptidoglycan: transfers peptidoglycan precursor phospho-MurNAc-pentapeptide from UDP-MurNAc-pentapeptide onto the lipid carrier undecaprenyl phosphate, yielding undecaprenyl-pyrophosphoryl-MurNAc-pentapeptide, known as lipid I. The chain is Phospho-N-acetylmuramoyl-pentapeptide-transferase from Anaeromyxobacter sp. (strain Fw109-5).